A 458-amino-acid chain; its full sequence is Argininosuccinate lyase (458 aa).

Belongs to the lyase 1 family. Argininosuccinate lyase subfamily.

Its subcellular location is the cytoplasm. It catalyses the reaction 2-(N(omega)-L-arginino)succinate = fumarate + L-arginine. The protein operates within amino-acid biosynthesis; L-arginine biosynthesis; L-arginine from L-ornithine and carbamoyl phosphate: step 3/3. The protein is Argininosuccinate lyase of Neisseria gonorrhoeae (strain ATCC 700825 / FA 1090).